Consider the following 853-residue polypeptide: Stachyose synthase (853 aa).

A propeptide spanning residues 1 to 11 (MAPPLNSTTSN) is cleaved from the precursor.

Belongs to the glycosyl hydrolases 36 family.

It is found in the cytoplasm. It carries out the reaction alpha-D-galactosyl-(1-&gt;3)-1D-myo-inositol + raffinose = stachyose + myo-inositol. It participates in glycan metabolism; stachyose biosynthesis; stachyose from raffinose: step 1/1. Functionally, catalyzes stachyose synthesis by transfer of a galactosyl moiety from galactinol to raffinose. Also catalyzes verbascose synthesis by galactosyl transfer from galactinol to stachyose or from one stachyose molecule to another. Oligosaccharides of the raffinose family play a protective role in maturation drying of seeds. They may act as cryoprotectants in frost-hardy plants. This chain is Stachyose synthase (STS1), found in Pisum sativum (Garden pea).